We begin with the raw amino-acid sequence, 316 residues long: MSDISKASLPKAIFLMGPTASGKTALAIELRKILPVELISVDSALIYKGMDIGTAKPNAEELLAAPHRLLDIRDPSQAYSAADFRRDALAEMADITAAGRIPLLVGGTMLYFKALLEGLSPLPSADPEVRARIEQQAAEQGWESLHRQLQEVDPVAAARIHPNDPQRLSRALEVFFISGKTLTELTQTSGDALPYQVHQFAIAPASRELLHQRIEQRFHQMLASGFEAEVRALFARGDLHTDLPSIRCVGYRQMWSYLEGEISYDEMVYLGVCATRQLAKRQITWLRGWEGVHWLDSEKPEQARDEVLQVVGAIAG.

Gly17–Thr24 provides a ligand contact to ATP. Residue Thr19 to Thr24 coordinates substrate. Interaction with substrate tRNA regions lie at residues Asp42–Leu45, Gln166–Arg170, Arg247–Arg252, and Lys280–Arg287.

The protein belongs to the IPP transferase family. Monomer. Mg(2+) serves as cofactor.

It carries out the reaction adenosine(37) in tRNA + dimethylallyl diphosphate = N(6)-dimethylallyladenosine(37) in tRNA + diphosphate. Its function is as follows. Catalyzes the transfer of a dimethylallyl group onto the adenine at position 37 in tRNAs that read codons beginning with uridine, leading to the formation of N6-(dimethylallyl)adenosine (i(6)A). The chain is tRNA dimethylallyltransferase from Shigella dysenteriae serotype 1 (strain Sd197).